Consider the following 350-residue polypeptide: Phosphotriesterase-related protein (350 aa).

6 residues coordinate a divalent metal cation: His-22, His-24, Glu-169, His-201, His-230, and Asp-298.

The protein belongs to the metallo-dependent hydrolases superfamily. Phosphotriesterase family. It depends on a divalent metal cation as a cofactor.

The polypeptide is Phosphotriesterase-related protein (Drosophila yakuba (Fruit fly)).